The sequence spans 956 residues: Bromodomain testis-specific protein (956 aa).

A Bromo 1 domain is found at 26-132 (RLTNQLQFLQ…KLFMQKLSQM (107 aa)). Position 186 is a phosphoserine (S186). Positions 208 to 219 (KGVKRRADTTTP) match the Nuclear localization signal motif. The interval 210–239 (VKRRADTTTPTTSIAKASSESPPTLRETKP) is disordered. Positions 216–231 (TTTPTTSIAKASSESP) are enriched in polar residues. A Bromo 2 domain is found at 266–375 (VKVTEQLKHC…DVFELHFAKI (110 aa)). Disordered stretches follow at residues 391–420 (NSAQALSRESSSEASSGDASSEDSEDERVQ), 442–508 (VPLR…PMNY), 607–747 (NQLN…HSQQ), and 859–934 (LEHN…RREA). Residues 392–409 (SAQALSRESSSEASSGDA) show a composition bias toward low complexity. The stretch at 417–442 (ERVQHLAKLQEQLNAVHQQLQVLSQV) forms a coiled coil. Basic residues predominate over residues 445–463 (RKLKKKNEKSKRAPKRKKV). The 83-residue stretch at 496–578 (KSEEEDNAKP…ACLRKRSLKP (83 aa)) folds into the NET domain. Residues 625-640 (PPPPPPPPPPPPPPPE) are compositionally biased toward pro residues. Positions 649 to 688 (DSSSSSGSGSGSSSSSSGSSSSSSSSGSASSSSDSSSSDS) are enriched in low complexity. Polar residues predominate over residues 714-724 (KQIQSSVQDIT). A coiled-coil region spans residues 844–940 (EKEVKARTQE…RREAMAGTID (97 aa)). Basic and acidic residues-rich tracts occupy residues 859–874 (LEHNAKDPKVSQENQR) and 915–934 (LLKDRNLAREKEQERRRREA).

It belongs to the BET family. In terms of assembly, interacts with SMARCE1. Interacts with mRNA splicing machinery proteins SRSF2, DDX5, HNRNPK and TARDBP. Interacts with the acetylated N-terminus of histone H1, H2, H3 and H4. Interacts with P-TEFb components CDK9 and CCNT1/cyclin-T1. In terms of processing, ubiquitinated in a SPOP-dependent manner, leading to proteasomal degradation. In terms of tissue distribution, testis-specific. Expressed in germinal cells from the early meiotic (pachytene) spermatocytes and during spermiogenesis in the round and elongating spermatids until the condensed late spermatids. No expression seen in spermatogonia.

Its subcellular location is the nucleus. Testis-specific chromatin protein that specifically binds histone H4 acetylated at 'Lys-5' and 'Lys-8' (H4K5ac and H4K8ac, respectively) and plays a key role in spermatogenesis. Required in late pachytene spermatocytes: plays a role in meiotic and post-meiotic cells by binding to acetylated histones at the promoter of specific meiotic and post-meiotic genes, facilitating their activation at the appropriate time. In the post-meiotic phase of spermatogenesis, binds to hyperacetylated histones and participates in their general removal from DNA. Also recognizes and binds a subset of butyrylated histones: able to bind histone H4 butyrylated at 'Lys-8' (H4K8ac), while it is not able to bind H4 butyrylated at 'Lys-5' (H4K5ac). Also acts as a component of the splicing machinery in pachytene spermatocytes and round spermatids and participates in 3'-UTR truncation of specific mRNAs in post-meiotic spermatids. Required for chromocenter organization, a structure comprised of peri-centromeric heterochromatin. The polypeptide is Bromodomain testis-specific protein (Brdt) (Mus musculus (Mouse)).